The chain runs to 295 residues: Very long chain fatty acid elongase 5 (295 aa).

Helical transmembrane passes span 26-46, 64-84, 112-132, 150-170, 175-192, 207-223, and 227-247; these read WLLL…LFIV, ILVV…YELV, VLWW…FFIL, MLNI…YFGA, FIHV…IPAM, LTQF…AMIW, and FPMG…ILFG. The tract at residues 265-295 is disordered; the sequence is YQNGSASAVNGHTNSFSSLEDNVKQRKQRQD. Over residues 266 to 284 the composition is skewed to polar residues; it reads QNGSASAVNGHTNSFSSLE. The segment covering 285–295 has biased composition (basic and acidic residues); sequence DNVKQRKQRQD.

This sequence belongs to the ELO family. ELOVL5 subfamily.

It localises to the endoplasmic reticulum membrane. The protein resides in the cell projection. It is found in the dendrite. It carries out the reaction a very-long-chain acyl-CoA + malonyl-CoA + H(+) = a very-long-chain 3-oxoacyl-CoA + CO2 + CoA. The catalysed reaction is (6Z,9Z,12Z)-octadecatrienoyl-CoA + malonyl-CoA + H(+) = (8Z,11Z,14Z)-3-oxoeicosatrienoyl-CoA + CO2 + CoA. The enzyme catalyses (9Z,12Z,15Z)-octadecatrienoyl-CoA + malonyl-CoA + H(+) = (11Z,14Z,17Z)-3-oxoeicosatrienoyl-CoA + CO2 + CoA. It catalyses the reaction (9Z)-hexadecenoyl-CoA + malonyl-CoA + H(+) = 3-oxo-(11Z)-octadecenoyl-CoA + CO2 + CoA. It carries out the reaction (9Z)-octadecenoyl-CoA + malonyl-CoA + H(+) = 3-oxo-(11Z)-eicosenoyl-CoA + CO2 + CoA. The catalysed reaction is (11Z)-octadecenoyl-CoA + malonyl-CoA + H(+) = 3-oxo-(13Z)-eicosenoyl-CoA + CO2 + CoA. The enzyme catalyses (9Z,12Z)-octadecadienoyl-CoA + malonyl-CoA + H(+) = (11Z,14Z)-3-oxoicosa-11,14-dienoyl-CoA + CO2 + CoA. It catalyses the reaction (6Z,9Z,12Z,15Z)-octadecatetraenoyl-CoA + malonyl-CoA + H(+) = (8Z,11Z,14Z,17Z)-3-oxoicosatetraenoyl-CoA + CO2 + CoA. It carries out the reaction (5Z,8Z,11Z,14Z)-eicosatetraenoyl-CoA + malonyl-CoA + H(+) = (7Z,10Z,13Z,16Z)-3-oxodocosatetraenoyl-CoA + CO2 + CoA. The catalysed reaction is (5Z,8Z,11Z,14Z,17Z)-eicosapentaenoyl-CoA + malonyl-CoA + H(+) = 3-oxo-(7Z,10Z,13Z,16Z,19Z)-docosapentaenoyl-CoA + CO2 + CoA. It participates in lipid metabolism; polyunsaturated fatty acid biosynthesis. In terms of biological role, catalyzes the first and rate-limiting reaction of the four reactions that constitute the long-chain fatty acids elongation cycle. This endoplasmic reticulum-bound enzymatic process allows the addition of 2 carbons to the chain of long- and very long-chain fatty acids (VLCFAs) per cycle. Condensing enzyme that acts specifically toward polyunsaturated acyl-CoA with the higher activity toward C18:3(n-6) acyl-CoA. May participate in the production of monounsaturated and of polyunsaturated VLCFAs of different chain lengths that are involved in multiple biological processes as precursors of membrane lipids and lipid mediators. In conditions where the essential linoleic and alpha linoleic fatty acids are lacking it is also involved in the synthesis of Mead acid from oleic acid. The sequence is that of Very long chain fatty acid elongase 5 from Xenopus tropicalis (Western clawed frog).